A 317-amino-acid polypeptide reads, in one-letter code: Testis-expressed protein 19.2 (317 aa).

The segment covering 64–75 has biased composition (acidic residues); it reads MELSEASSEPEE. Positions 64–113 are disordered; it reads MELSEASSEPEEWPGLSGGEGQGHLPHGISVSAGSGAQGPQPVPTELGPQ. An important for interaction with piRNA region spans residues 101 to 145; the sequence is QGPQPVPTELGPQEAVPLDLGPEDAEWTQALPWRFDGLSPCSHWL.

Interacts with UBR2. Interacts with piRNA-associated proteins DDX4, EDC4, MAEL, PIWIL1, PIWIL2, RANBP9 and TDRD6. In terms of tissue distribution, specifically expressed in somatic cells of male gonad lineage.

Its subcellular location is the cytoplasm. Functionally, may be required during spermatogenesis, probably by participating in the repression of retrotransposable elements and prevent their mobilization. With its paralog, Tex19.1, collaborates with the Piwi-interacting RNA (piRNA) pathway, which mediates the repression of transposable elements during meiosis by forming complexes composed of piRNAs and Piwi proteins. Interacts with Piwi proteins and directly binds piRNAs, a class of 24 to 30 nucleotide RNAs that are generated by a Dicer-independent mechanism and are primarily derived from transposons and other repeated sequence elements. The sequence is that of Testis-expressed protein 19.2 (Tex19.2) from Mus musculus (Mouse).